Reading from the N-terminus, the 310-residue chain is Probable manganese-dependent inorganic pyrophosphatase (310 aa).

Histidine 9, aspartate 13, aspartate 15, aspartate 76, histidine 98, and aspartate 150 together coordinate Mn(2+).

Belongs to the PPase class C family. In terms of assembly, homodimer. It depends on Mn(2+) as a cofactor.

It localises to the cytoplasm. The enzyme catalyses diphosphate + H2O = 2 phosphate + H(+). The protein is Probable manganese-dependent inorganic pyrophosphatase (ppaC) of Streptococcus mutans serotype c (strain ATCC 700610 / UA159).